Reading from the N-terminus, the 263-residue chain is Small ribosomal subunit protein bS1c (263 aa).

S1 motif domains are found at residues 27–96 (GDIV…LSIR), 114–178 (DSLL…LSHR), and 192–260 (GNII…LSMK).

The protein belongs to the bacterial ribosomal protein bS1 family.

Its subcellular location is the plastid. It is found in the chloroplast. In Porphyra purpurea (Red seaweed), this protein is Small ribosomal subunit protein bS1c (rps1).